The chain runs to 333 residues: Holliday junction branch migration complex subunit RuvB (333 aa).

The interval 1–181 (MARILDNDLL…FGINGHMEYY (181 aa)) is large ATPase domain (RuvB-L). ATP contacts are provided by residues leucine 20, arginine 21, glycine 62, lysine 65, threonine 66, threonine 67, 128-130 (EDY), arginine 171, tyrosine 181, and arginine 218. Residue threonine 66 coordinates Mg(2+). The presensor-1 beta-hairpin stretch occupies residues 130-148 (YYIDIMIGAGETSRSVHLD). Residues 182–252 (ELPDLTEIVE…IADQALTMLD (71 aa)) form a small ATPAse domain (RuvB-S) region. Positions 255-333 (HEGLDYVDQK…HMGYDYTRDN (79 aa)) are head domain (RuvB-H). DNA is bound by residues arginine 291, arginine 310, arginine 312, and arginine 315.

Belongs to the RuvB family. Homohexamer. Forms an RuvA(8)-RuvB(12)-Holliday junction (HJ) complex. HJ DNA is sandwiched between 2 RuvA tetramers; dsDNA enters through RuvA and exits via RuvB. Only 4 subunits contact one DNA strand at any time. Two adjacent subunits are contacted by domain III of RuvA. An RuvB hexamer assembles on each DNA strand where it exits the tetramer. Each RuvB hexamer is contacted by two RuvA subunits (via domain III) on 2 adjacent RuvB subunits; this complex drives branch migration. In the full resolvosome a probable DNA-RuvA(4)-RuvB(12)-RuvC(2) complex forms which resolves the HJ.

Its subcellular location is the cytoplasm. It catalyses the reaction ATP + H2O = ADP + phosphate + H(+). Binding of domain III of RuvA to a single subunit of the RuvB hexamer activates the ATPase 2 subunits away and nucleotide exchange in the adjacent subunit. The RuvA-RuvB-RuvC complex processes Holliday junction (HJ) DNA during genetic recombination and DNA repair, while the RuvA-RuvB complex plays an important role in the rescue of blocked DNA replication forks via replication fork reversal (RFR). Catalyzes branch migration on Holliday junction (HJ) DNA in complex with RuvA from S.typhimurim and ATP. RuvA specifically binds to HJ cruciform DNA, conferring on it an open structure. The RuvB hexamer acts as an ATP-dependent pump, pulling dsDNA into and through the RuvAB complex. Forms 2 homohexamers on either side of HJ DNA bound by 1 or 2 RuvA tetramers; 4 subunits per hexamer contact DNA at a time. Coordinated motions by a converter formed by DNA-disengaged RuvB subunits stimulates ATP hydrolysis and nucleotide exchange. Immobilization of the converter enables RuvB to convert the ATP-contained energy into a lever motion, pulling 2 nucleotides of DNA out of the RuvA tetramer per ATP hydrolyzed, thus driving DNA branch migration. The RuvB motors rotate together with the DNA substrate, which together with the progressing nucleotide cycle forms the mechanistic basis for DNA recombination by continuous branch migration. Branch migration allows RuvC to scan DNA until it finds its consensus sequence, where it cleaves and resolves cruciform DNA. This Streptococcus thermophilus (strain ATCC BAA-250 / LMG 18311) protein is Holliday junction branch migration complex subunit RuvB.